Reading from the N-terminus, the 267-residue chain is Indole-3-glycerol phosphate synthase (267 aa).

It belongs to the TrpC family.

It carries out the reaction 1-(2-carboxyphenylamino)-1-deoxy-D-ribulose 5-phosphate + H(+) = (1S,2R)-1-C-(indol-3-yl)glycerol 3-phosphate + CO2 + H2O. It participates in amino-acid biosynthesis; L-tryptophan biosynthesis; L-tryptophan from chorismate: step 4/5. This chain is Indole-3-glycerol phosphate synthase, found in Cupriavidus taiwanensis (strain DSM 17343 / BCRC 17206 / CCUG 44338 / CIP 107171 / LMG 19424 / R1) (Ralstonia taiwanensis (strain LMG 19424)).